Consider the following 317-residue polypeptide: Nicotianamine synthase (317 aa).

It belongs to the nicotianamine synthase (NAS)-like family. In terms of assembly, homomultimer. In terms of tissue distribution, leaves and roots.

The enzyme catalyses 3 S-adenosyl-L-methionine = nicotianamine + 3 S-methyl-5'-thioadenosine + 3 H(+). In terms of biological role, synthesizes nicotianamine, a polyamine that serves as a sensor for the physiological iron status within the plant, and/or might be involved in the transport of iron. The polypeptide is Nicotianamine synthase (CHLN) (Solanum lycopersicum (Tomato)).